A 447-amino-acid polypeptide reads, in one-letter code: Beta-glucuronosyltransferase GlcAT14A (447 aa).

Residues 1-33 lie on the Cytoplasmic side of the membrane; that stretch reads MKKLRSYYSNVRHHQNHHHHHHHHSNIVSSERK. The chain crosses the membrane as a helical; Signal-anchor for type II membrane protein span at residues 34–54; it reads WIFFPLLIGSIFALFLLFLTT. The Lumenal portion of the chain corresponds to 55-447; it reads TLTSPTGGVR…TENFRSKQCK (393 aa). Asn-151, Asn-200, Asn-329, and Asn-405 each carry an N-linked (GlcNAc...) asparagine glycan.

It belongs to the glycosyltransferase 14 family.

The protein resides in the golgi apparatus membrane. Functionally, beta-glucuronosyltransferase involved in the biosynthesis of type II arabinogalactan (AG). Modifies both the beta-1,6-linked galactan and beta-1,3-linked galactan present in type II AG. Transfers glucuronate to beta-1,6-galactooligosaccharides with degrees of polymerization ranging from 3 to 11. Transfers glucuronate to beta-1,3-galactooligosaccharides with degrees of polymerization ranging from 5 to 7. The addition of glucuronate at the O6 position may terminate galactose chain extension. Required for cell elongation during seedling growth. The protein is Beta-glucuronosyltransferase GlcAT14A of Arabidopsis thaliana (Mouse-ear cress).